Consider the following 246-residue polypeptide: Probable transcriptional regulatory protein CKO_01097 (246 aa).

The segment at 1 to 20 (MAGHSKWANTRHRKAAQDAK) is disordered.

This sequence belongs to the TACO1 family.

It localises to the cytoplasm. The chain is Probable transcriptional regulatory protein CKO_01097 from Citrobacter koseri (strain ATCC BAA-895 / CDC 4225-83 / SGSC4696).